We begin with the raw amino-acid sequence, 371 residues long: Neuropeptide S receptor (371 aa).

The Extracellular portion of the chain corresponds to 1–52 (MPANFTEGSFDSNGTGQMLDSSPVACTETVTFTEVVEGKEWGSFYYSFKTEQ). N-linked (GlcNAc...) asparagine glycosylation is found at N4 and N13. The chain crosses the membrane as a helical span at residues 53 to 73 (LITLWVLFVFTIVGNSVVLFS). The Cytoplasmic portion of the chain corresponds to 74 to 82 (TWRRKRKSR). The chain crosses the membrane as a helical span at residues 83–103 (MTFFVTQLAITDSFTGLVNIL). Topologically, residues 104-123 (TDIIWRFTGDFMAPDLVCRV) are extracellular. An intrachain disulfide couples C121 to C197. The chain crosses the membrane as a helical span at residues 124 to 144 (VRYLQVVLLYASTYVLVSLSI). Over 145–164 (DRYHAIVYPMKFLQGEKQAK) the chain is Cytoplasmic. A helical transmembrane segment spans residues 165 to 185 (VLIVIAWSLSFLFSIPTLIIF). Residues 186–212 (GKRTLSNGEVQCWALWPDDSYWTPYMT) are Extracellular-facing. Residues 213 to 233 (IVAFLVYFIPLTIISVMYGIV) traverse the membrane as a helical segment. Residues 234-275 (IRTIWIKSKTYETVISNCSDGKLCSSYNRGLISKAKIKAIKY) are Cytoplasmic-facing. Residues 276–296 (SIVIILAFICCWSPYFLFDIL) form a helical membrane-spanning segment. Topologically, residues 297–312 (DNFNLLPDTQERFYAS) are extracellular. A helical transmembrane segment spans residues 313–333 (VIIQNLPALNSAINPLIYCVF). At 334–371 (SSSISFPCGERRSQDSIMTFRERTERHEMQILSKPEFI) the chain is on the cytoplasmic side.

The protein belongs to the G-protein coupled receptor 1 family. Vasopressin/oxytocin receptor subfamily.

Its subcellular location is the cell membrane. Its function is as follows. G-protein coupled receptor for neuropeptide S (NPS). Promotes mobilization of intracellular Ca(2+) stores. Inhibits cell growth in response to NPS binding. Involved in pathogenesis of asthma and other IgE-mediated diseases. In Macaca mulatta (Rhesus macaque), this protein is Neuropeptide S receptor (NPSR1).